We begin with the raw amino-acid sequence, 482 residues long: MKFIIKLFPEITIKSQSVRLRFIKILTGNIRNVLKNYDETLAVVRHWDHIEVRAKDENQRPAIRDALTRIPGIHHILEVEDVPFTSLHDIFEQTLPLWREALEGKTFCVRVKRRGKHEFTSIEVERYVGGGLNQHIETARVKLTDPDVTVNLEIENDRLLLVKGRYEGIGGFPIGTQEDVLSLISGGFDSGVSSYMLMRRGCRVHYCFFNLGGAAHEIGVRQVAHYLWNRFGSSHRVRFVAINFEPVVGEILEKVDDGQMGVVLKRMMVRAASKVAERYGVQALVTGEALGQVSSQTLTNLRLIDNVSDTLILRPLISHDKEHIIDLAREIGTEDFARTMPEYCGVISKSPTVKAVKAKIEAEEEHFDFSILDKVVEEASNIDIREIAQQTEETVVEVETVTGFGANDAILDIRSIDEQEDKPLKVEGVEVVSLPFYKLSTKFGDLDQSKTWLLWCERGVMSRLQALYLREQGFSNVKVYRP.

In terms of domain architecture, THUMP spans 61–165 (PAIRDALTRI…NDRLLLVKGR (105 aa)). ATP is bound by residues 183–184 (LI), Lys-265, Gly-287, and Gln-296. Cys-344 and Cys-456 are oxidised to a cystine. One can recognise a Rhodanese domain in the interval 404-482 (FGANDAILDI…GFSNVKVYRP (79 aa)). Cys-456 functions as the Cysteine persulfide intermediate in the catalytic mechanism.

It belongs to the ThiI family.

It localises to the cytoplasm. It catalyses the reaction [ThiI sulfur-carrier protein]-S-sulfanyl-L-cysteine + a uridine in tRNA + 2 reduced [2Fe-2S]-[ferredoxin] + ATP + H(+) = [ThiI sulfur-carrier protein]-L-cysteine + a 4-thiouridine in tRNA + 2 oxidized [2Fe-2S]-[ferredoxin] + AMP + diphosphate. The catalysed reaction is [ThiS sulfur-carrier protein]-C-terminal Gly-Gly-AMP + S-sulfanyl-L-cysteinyl-[cysteine desulfurase] + AH2 = [ThiS sulfur-carrier protein]-C-terminal-Gly-aminoethanethioate + L-cysteinyl-[cysteine desulfurase] + A + AMP + 2 H(+). Its pathway is cofactor biosynthesis; thiamine diphosphate biosynthesis. Its function is as follows. Catalyzes the ATP-dependent transfer of a sulfur to tRNA to produce 4-thiouridine in position 8 of tRNAs, which functions as a near-UV photosensor. Also catalyzes the transfer of sulfur to the sulfur carrier protein ThiS, forming ThiS-thiocarboxylate. This is a step in the synthesis of thiazole, in the thiamine biosynthesis pathway. The sulfur is donated as persulfide by IscS. The polypeptide is tRNA sulfurtransferase (Klebsiella pneumoniae subsp. pneumoniae (strain ATCC 700721 / MGH 78578)).